Consider the following 80-residue polypeptide: Exodeoxyribonuclease 7 small subunit (80 aa).

It belongs to the XseB family. As to quaternary structure, heterooligomer composed of large and small subunits.

The protein localises to the cytoplasm. It carries out the reaction Exonucleolytic cleavage in either 5'- to 3'- or 3'- to 5'-direction to yield nucleoside 5'-phosphates.. Bidirectionally degrades single-stranded DNA into large acid-insoluble oligonucleotides, which are then degraded further into small acid-soluble oligonucleotides. The protein is Exodeoxyribonuclease 7 small subunit of Erwinia tasmaniensis (strain DSM 17950 / CFBP 7177 / CIP 109463 / NCPPB 4357 / Et1/99).